The primary structure comprises 414 residues: Protein RecA (414 aa).

78 to 85 (GPESSGKT) contributes to the ATP binding site. Residues 361–384 (QEKAVEALKKEEGSKEDALTGNKD) are compositionally biased toward basic and acidic residues. Positions 361–414 (QEKAVEALKKEEGSKEDALTGNKDETDDSAQKNSAASKAKRAEVVGLPADDSLF) are disordered.

It belongs to the RecA family.

The protein localises to the cytoplasm. Can catalyze the hydrolysis of ATP in the presence of single-stranded DNA, the ATP-dependent uptake of single-stranded DNA by duplex DNA, and the ATP-dependent hybridization of homologous single-stranded DNAs. It interacts with LexA causing its activation and leading to its autocatalytic cleavage. In Treponema denticola (strain ATCC 35405 / DSM 14222 / CIP 103919 / JCM 8153 / KCTC 15104), this protein is Protein RecA.